We begin with the raw amino-acid sequence, 833 residues long: MSFYNHKEIEPKWQGYWAEHHTFKTGTDASKPKFYALDMFPYPSGAGLHVGHPEGYTATDILSRYKRAQGYNVLHPMGWDAFGLPAEQYAMDTGNDPAEFTSENIANFKRQINALGFSYDWDREVNTTDPNYYKWTQWIFTKLYEKGLAYEAEVPVNWVEELGTAIANEEVLPDGTSERGGYPVVRKPMRQWMLKITAYAERLLNDLDELDWSESIKDMQRNWIGKSTGANVTFKVKGTDKEFTVFTTRPDTLFGATFTVLAPEHELVDAITSSEQAEAVVDYKHQASLKSDLARTDLAKEKTGVWTGAYAINPVNGKEMPIWIADYVLASYGTGAVMAVPAHDQRDWEFAKQFDLPIVEVLEGGNVEEAAYTEDGLHVNSDFLDGLNKEDAIAKIVACLEEKGCGQEKVTYRLRDWLFSRQRYWGEPIPIIHWEDGTSTAVPETELPLVLPVTKDIRPSGTGESPLANLTDWLEVTREDGVKGRRETNTMPQWAGSSWYYLRYIDPHNTEKLADEDLLKQWLPVDIYVGGAEHAVLHLLYARFWHKFLYDLGVVPTKEPFQKLFNQGMILGTSYRDHRGALVATDKVEKRDGSFFHIETGEELEQAPAKMSKSLKNVVNPDDVVEQYGADTLRVYEMFMGPLDASIAWSEEGLEGSRKFLDRVYRLITSKEILAENNGALDKAYNETVKAVTEQIESLKFNTAIAQLMVFVNAANKEDKLYVDYAKGFIQLIAPFAPHLAEELWQTVAETDKSISYVAWPTWDESKLVEDEIEIVVQIKGKVRAKLMVAKDLSREELQEIALADEKVKAEIDGKEIVKVIAVPNKLVNIVVK.

The 'HIGH' region motif lies at Pro-41–His-52. Residues Lys-610–Ser-614 carry the 'KMSKS' region motif. Lys-613 contributes to the ATP binding site.

This sequence belongs to the class-I aminoacyl-tRNA synthetase family.

It localises to the cytoplasm. It carries out the reaction tRNA(Leu) + L-leucine + ATP = L-leucyl-tRNA(Leu) + AMP + diphosphate. This chain is Leucine--tRNA ligase, found in Streptococcus pneumoniae (strain CGSP14).